The chain runs to 153 residues: Mitochondrial fission 1 protein (153 aa).

The Cytoplasmic portion of the chain corresponds to 1–124 (MTQLPYAVDA…LIDDKVTKEG (124 aa)). One copy of the TPR repeat lies at 73–106 (RECLYYLALGNYKLGNYAQARKYNDALLENEPAN). Residues 125-145 (LMGVAIISGVAVAAGVIGGVL) traverse the membrane as a helical segment. Residues 146 to 153 (LRNLGRKR) lie on the Mitochondrial intermembrane side of the membrane.

It belongs to the FIS1 family.

It localises to the mitochondrion outer membrane. Its function is as follows. Has a role in mitochondrial fission. Has a role in outer membrane fission but not matrix separation. The sequence is that of Mitochondrial fission 1 protein (mtp-2) from Neurospora crassa (strain ATCC 24698 / 74-OR23-1A / CBS 708.71 / DSM 1257 / FGSC 987).